A 309-amino-acid chain; its full sequence is SERTA domain-containing protein 2 (309 aa).

3 disordered regions span residues 1–30 (MLGKGGKRKFDEHEDGLEGKIVSPSDGPSR), 79–114 (EGSLRPAFTPSSQPSNSLSDSYQEAPPPAPHPCDLG), and 175–220 (PTST…MDSL). Residues 8–18 (RKFDEHEDGLE) are compositionally biased toward basic and acidic residues. The region spanning 33 to 80 (YTLQRQTIFNISLMKLYNHRPLTEPSLQKTVLINNMLRRIQEELKQEG) is the SERTA domain. Low complexity-rich tracts occupy residues 89–99 (SSQPSNSLSDS) and 175–189 (PTSTSTEAAHTAAPE). Over residues 204–216 (EGPEEGRTDDSRF) the composition is skewed to basic and acidic residues. Positions 230 to 306 (TGFLTDLTLD…TELDHIMEVL (77 aa)) are required for transactivation activity. The short motif at 233-238 (LTDLTL) is the Nuclear export signal (NES) element.

Interacts with XPO1; which mediates nuclear export. Interacts with TFDP1; modulates transactivation activity of TFDP1/E2F complexes. In terms of processing, polyubiquitinated, which promotes proteasomal degradation. As to expression, expressed in white and brown adipose tissue.

The protein resides in the nucleus. The protein localises to the cytoplasm. In terms of biological role, acts at E2F-responsive promoters as coregulator to integrate signals provided by PHD- and/or bromodomain-containing transcription factors. May act as coactivator as well as corepressor of E2F1-TFDP1 and E2F4-TFDP1 complexes on E2F consensus binding sites, which would activate or inhibit E2F-target genes expression. Modulates fat storage by down-regulating the expression of key genes involved in adipocyte lipolysis, thermogenesis and oxidative metabolism. The protein is SERTA domain-containing protein 2 (Sertad2) of Mus musculus (Mouse).